We begin with the raw amino-acid sequence, 241 residues long: Glucosamine-6-phosphate deaminase (241 aa).

Residue D67 is the Proton acceptor; for enolization step of the active site. N136 (for ring-opening step) is an active-site residue. The active-site Proton acceptor; for ring-opening step is the H138. E143 serves as the catalytic For ring-opening step.

It belongs to the glucosamine/galactosamine-6-phosphate isomerase family. NagB subfamily.

It catalyses the reaction alpha-D-glucosamine 6-phosphate + H2O = beta-D-fructose 6-phosphate + NH4(+). The protein operates within amino-sugar metabolism; N-acetylneuraminate degradation; D-fructose 6-phosphate from N-acetylneuraminate: step 5/5. Its function is as follows. Catalyzes the reversible isomerization-deamination of glucosamine 6-phosphate (GlcN6P) to form fructose 6-phosphate (Fru6P) and ammonium ion. In Alkaliphilus oremlandii (strain OhILAs) (Clostridium oremlandii (strain OhILAs)), this protein is Glucosamine-6-phosphate deaminase.